Reading from the N-terminus, the 564-residue chain is Proline--tRNA ligase (564 aa).

It belongs to the class-II aminoacyl-tRNA synthetase family. ProS type 1 subfamily. As to quaternary structure, homodimer.

It is found in the cytoplasm. The catalysed reaction is tRNA(Pro) + L-proline + ATP = L-prolyl-tRNA(Pro) + AMP + diphosphate. Catalyzes the attachment of proline to tRNA(Pro) in a two-step reaction: proline is first activated by ATP to form Pro-AMP and then transferred to the acceptor end of tRNA(Pro). As ProRS can inadvertently accommodate and process non-cognate amino acids such as alanine and cysteine, to avoid such errors it has two additional distinct editing activities against alanine. One activity is designated as 'pretransfer' editing and involves the tRNA(Pro)-independent hydrolysis of activated Ala-AMP. The other activity is designated 'posttransfer' editing and involves deacylation of mischarged Ala-tRNA(Pro). The misacylated Cys-tRNA(Pro) is not edited by ProRS. This chain is Proline--tRNA ligase, found in Coxiella burnetii (strain RSA 331 / Henzerling II).